The primary structure comprises 636 residues: Threonine--tRNA ligase (636 aa).

The TGS domain maps to 1–59 (MPIITLPDGTKKIFEQVVSVEQVAKSMGLVKAALAGEVDGELVSTSFLIKTDANLTIIT). The tract at residues 240-531 (DHRKIGKTQD…LIEHYEGAYP (292 aa)) is catalytic. 3 residues coordinate Zn(2+): C331, H382, and H508.

Belongs to the class-II aminoacyl-tRNA synthetase family. In terms of assembly, homodimer. Requires Zn(2+) as cofactor.

It localises to the cytoplasm. It catalyses the reaction tRNA(Thr) + L-threonine + ATP = L-threonyl-tRNA(Thr) + AMP + diphosphate + H(+). In terms of biological role, catalyzes the attachment of threonine to tRNA(Thr) in a two-step reaction: L-threonine is first activated by ATP to form Thr-AMP and then transferred to the acceptor end of tRNA(Thr). Also edits incorrectly charged L-seryl-tRNA(Thr). This Vesicomyosocius okutanii subsp. Calyptogena okutanii (strain HA) protein is Threonine--tRNA ligase.